Consider the following 432-residue polypeptide: Homogentisate 1,2-dioxygenase (432 aa).

His-286 acts as the Proton acceptor in catalysis. Residues His-329 and Glu-335 each coordinate Fe cation. Residues Tyr-344 and His-365 each coordinate homogentisate. His-365 serves as a coordination point for Fe cation.

This sequence belongs to the homogentisate dioxygenase family. As to quaternary structure, hexamer; dimer of trimers. Fe cation is required as a cofactor.

The enzyme catalyses homogentisate + O2 = 4-maleylacetoacetate + H(+). It functions in the pathway amino-acid degradation; L-phenylalanine degradation; acetoacetate and fumarate from L-phenylalanine: step 4/6. Functionally, involved in the catabolism of homogentisate (2,5-dihydroxyphenylacetate or 2,5-OH-PhAc), a central intermediate in the degradation of phenylalanine and tyrosine. Catalyzes the oxidative ring cleavage of the aromatic ring of homogentisate to yield maleylacetoacetate. The polypeptide is Homogentisate 1,2-dioxygenase (Bordetella bronchiseptica (strain ATCC BAA-588 / NCTC 13252 / RB50) (Alcaligenes bronchisepticus)).